The chain runs to 513 residues: ATP synthase subunit alpha (513 aa).

Residue 169–176 (GDRQTGKT) participates in ATP binding.

This sequence belongs to the ATPase alpha/beta chains family. In terms of assembly, F-type ATPases have 2 components, CF(1) - the catalytic core - and CF(0) - the membrane proton channel. CF(1) has five subunits: alpha(3), beta(3), gamma(1), delta(1), epsilon(1). CF(0) has three main subunits: a(1), b(2) and c(9-12). The alpha and beta chains form an alternating ring which encloses part of the gamma chain. CF(1) is attached to CF(0) by a central stalk formed by the gamma and epsilon chains, while a peripheral stalk is formed by the delta and b chains.

It localises to the cell inner membrane. It carries out the reaction ATP + H2O + 4 H(+)(in) = ADP + phosphate + 5 H(+)(out). Functionally, produces ATP from ADP in the presence of a proton gradient across the membrane. The alpha chain is a regulatory subunit. The polypeptide is ATP synthase subunit alpha (Thiobacillus denitrificans (strain ATCC 25259 / T1)).